The following is a 257-amino-acid chain: UPF0246 protein Rpic_2164 (257 aa).

The protein belongs to the UPF0246 family.

The polypeptide is UPF0246 protein Rpic_2164 (Ralstonia pickettii (strain 12J)).